A 1495-amino-acid polypeptide reads, in one-letter code: ABC transporter C family member 12 (1495 aa).

11 helical membrane-spanning segments follow: residues 38 to 58 (VMLVSHFVLLGLCFYRIWIIF), 76 to 96 (VLGLLACYCVVEPVLRLVMGI), 110 to 130 (FEVASLMVEAFAWFSMLVLIG), 146 to 166 (FGVLYVLVADAVLLDLVLPLK), 173 to 195 (ALYLFISSRCSQALFGILLLIYI), 303 to 323 (FWLAGIFKIGNDLSQFVGPVI), 337 to 357 (AWVGYVYAFIIFVGVTLGVLC), 420 to 440 (GLWSAPFRIIVSMILLYQQLG), 441 to 461 (VASLFGSLILFLLIPLQTLII), 528 to 548 (FILNSIPVVVTVVSFGVFVLL), and 558 to 578 (FTSLSLFAVLRFPLNMLPNLL). The region spanning 303–583 (FWLAGIFKIG…LPNLLSQVVN (281 aa)) is the ABC transmembrane type-1 1 domain. The 225-residue stretch at 615–839 (ISIKNGYFSW…GILFKKLMEN (225 aa)) folds into the ABC transporter 1 domain. ATP is bound at residue 650–657 (GGTGEGKT). The next 5 helical transmembrane spans lie at 907 to 927 (AVGGLWVVMILLACYLATEVL), 949 to 969 (PGFYIVVYALLGFGQVAVTFT), 1042 to 1062 (FALIGTVSTISLWAIMPLLIL), 1140 to 1160 (LETLGGVMIWLTATFAVLQNG), and 1166 to 1186 (AGFASTMGLLLSYTLNITSLL). Positions 914 to 1198 (VMILLACYLA…VLRQASRAEN (285 aa)) constitute an ABC transmembrane type-1 2 domain. The 235-residue stretch at 1235-1469 (IKFEDVHLRY…DTSAFFRMVH (235 aa)) folds into the ABC transporter 2 domain. 1269–1276 (GRTGAGKS) is an ATP binding site.

It belongs to the ABC transporter superfamily. ABCC family. Conjugate transporter (TC 3.A.1.208) subfamily. As to expression, ubiquitous.

The protein localises to the membrane. The enzyme catalyses ATP + H2O + xenobioticSide 1 = ADP + phosphate + xenobioticSide 2.. Functionally, pump for glutathione S-conjugates. The protein is ABC transporter C family member 12 (ABCC12) of Arabidopsis thaliana (Mouse-ear cress).